Consider the following 228-residue polypeptide: Ferric nitrobindin-like protein (228 aa).

The tract at residues 1 to 21 is disordered; that stretch reads MTSDEVRDGAGSPADSSKGNK. A GXWXGXG motif is present at residues 75 to 81; it reads GVWRGEG.

This sequence belongs to the nitrobindin family.

The polypeptide is Ferric nitrobindin-like protein (Mycobacterium leprae (strain TN)).